The sequence spans 477 residues: Aspartyl/glutamyl-tRNA(Asn/Gln) amidotransferase subunit B (477 aa).

This sequence belongs to the GatB/GatE family. GatB subfamily. Heterotrimer of A, B and C subunits.

The enzyme catalyses L-glutamyl-tRNA(Gln) + L-glutamine + ATP + H2O = L-glutaminyl-tRNA(Gln) + L-glutamate + ADP + phosphate + H(+). It catalyses the reaction L-aspartyl-tRNA(Asn) + L-glutamine + ATP + H2O = L-asparaginyl-tRNA(Asn) + L-glutamate + ADP + phosphate + 2 H(+). Functionally, allows the formation of correctly charged Asn-tRNA(Asn) or Gln-tRNA(Gln) through the transamidation of misacylated Asp-tRNA(Asn) or Glu-tRNA(Gln) in organisms which lack either or both of asparaginyl-tRNA or glutaminyl-tRNA synthetases. The reaction takes place in the presence of glutamine and ATP through an activated phospho-Asp-tRNA(Asn) or phospho-Glu-tRNA(Gln). The sequence is that of Aspartyl/glutamyl-tRNA(Asn/Gln) amidotransferase subunit B from Ligilactobacillus salivarius (strain UCC118) (Lactobacillus salivarius).